The primary structure comprises 863 residues: Probable beta-glucosidase A (863 aa).

The N-terminal stretch at 1–19 (MKLGWLEAAALTAASVASA) is a signal peptide. N-linked (GlcNAc...) asparagine glycans are attached at residues asparagine 65, asparagine 214, and asparagine 255. The active site involves aspartate 283. Residues asparagine 318, asparagine 325, asparagine 357, asparagine 493, asparagine 526, asparagine 545, asparagine 567, asparagine 664, and asparagine 715 are each glycosylated (N-linked (GlcNAc...) asparagine). Residues 720–754 (KESSGDPNYGWDDEDYIPEGAKDGSPQDVLPSGGG) form a disordered region.

Belongs to the glycosyl hydrolase 3 family.

The protein localises to the secreted. It carries out the reaction Hydrolysis of terminal, non-reducing beta-D-glucosyl residues with release of beta-D-glucose.. It functions in the pathway glycan metabolism; cellulose degradation. In terms of biological role, beta-glucosidases are one of a number of cellulolytic enzymes involved in the degradation of cellulosic biomass. Catalyzes the last step releasing glucose from the inhibitory cellobiose. The chain is Probable beta-glucosidase A (bglA) from Emericella nidulans (strain FGSC A4 / ATCC 38163 / CBS 112.46 / NRRL 194 / M139) (Aspergillus nidulans).